We begin with the raw amino-acid sequence, 347 residues long: Heat-inducible transcription repressor HrcA (347 aa).

Belongs to the HrcA family.

In terms of biological role, negative regulator of class I heat shock genes (grpE-dnaK-dnaJ and groELS operons). Prevents heat-shock induction of these operons. This is Heat-inducible transcription repressor HrcA from Enterococcus faecalis (strain ATCC 700802 / V583).